The following is a 1035-amino-acid chain: Condensin complex subunit 3 (1035 aa).

2 HEAT repeats span residues 113–150 and 153–191; these read RFVD…NIGE and ESLF…EEQT. Phosphoserine is present on S198. An HEAT 3 repeat occupies 201–239; sequence EENFEATRTLVASIQNDPSAEVRRAAMLNLINDNNTRPY. The tract at residues 500-536 is disordered; the sequence is EEKIKSKKINRRNETSVDEEDENGTHNDEVNEDEEDD. HEAT repeat units follow at residues 597 to 635 and 827 to 864; these read ILIA…LDVK and VQLT…SSEQ. Basic and acidic residues predominate over residues 909-919; the sequence is ERSETQTKDEN. 2 disordered regions span residues 909-934 and 959-995; these read ERSE…GNSF and TTVN…LENM. Composition is skewed to polar residues over residues 920–934 and 959–973; these read NTAN…GNSF and TTVN…TEQS. S933 carries the post-translational modification Phosphoserine. Phosphoserine is present on S981. Polar residues predominate over residues 986 to 995; the sequence is IDTSKNLENM. Phosphoserine is present on S1008. The tract at residues 1012–1035 is disordered; that stretch reads PDEKSDAMSIDEEDKDSESFSEVC.

This sequence belongs to the CND3 (condensin subunit 3) family. Component of the condensin complex, which contains the SMC2 and SMC4 heterodimer, and three non SMC subunits that probably regulate the complex: BRN1, YCS4 and YCG1/YCS5.

It is found in the nucleus. The protein localises to the cytoplasm. Its subcellular location is the chromosome. Functionally, regulatory subunit of the condensin complex, a complex required for conversion of interphase chromatin into mitotic-like condense chromosomes. The condensin complex probably introduces positive supercoils into relaxed DNA in the presence of type I topoisomerases and converts nicked DNA into positive knotted forms in the presence of type II topoisomerases. The condensin complex probably also plays a role during interphase. This Saccharomyces cerevisiae (strain ATCC 204508 / S288c) (Baker's yeast) protein is Condensin complex subunit 3 (YCG1).